Consider the following 161-residue polypeptide: MSAMGWTLLAAALLAISAQSNGCYIQNCPRGGKRAVETELHSCAACGLGGQCVGPSICCGGLLGGGRGGGCIVGGPLSAPCKRENLHPEPCRPGGGSSCGLEGICAAPGICCTDVTCSIDATCDDVTEKAGVTFSGATGGLANPTGDLLRKVLLLANADLE.

Positions 1–22 (MSAMGWTLLAAALLAISAQSNG) are cleaved as a signal peptide. An intrachain disulfide couples C23 to C28. G31 is modified (glycine amide). Disulfide bonds link C43–C91, C46–C58, C52–C81, C59–C71, C99–C111, C105–C123, and C112–C117.

It belongs to the vasopressin/oxytocin family.

Its subcellular location is the secreted. Functionally, vasotocin is an antidiuretic hormone. This Eptatretus stoutii (Pacific hagfish) protein is Vasotocin-neurophysin VT.